Consider the following 148-residue polypeptide: UPF0178 protein SUN_1096 (148 aa).

Belongs to the UPF0178 family.

The chain is UPF0178 protein SUN_1096 from Sulfurovum sp. (strain NBC37-1).